A 371-amino-acid chain; its full sequence is Capsular polysaccharide phosphotransferase cps12A (371 aa).

Belongs to the stealth family.

Its function is as follows. Part of a capsular polysaccharide synthesis locus. The polypeptide is Capsular polysaccharide phosphotransferase cps12A (cps12A) (Actinobacillus pleuropneumoniae (Haemophilus pleuropneumoniae)).